The primary structure comprises 117 residues: MDKKATRLRRAKKTRAKLGSQDRARLCVHRTPKHIYAQIISSDGSSVVASCSTVQADIKKQVAFGGNKEAAELVGKSIAEKAKAAGIESVAFDRSGFKYHGRVQVLADSARENGLQF.

Belongs to the universal ribosomal protein uL18 family. Part of the 50S ribosomal subunit; part of the 5S rRNA/L5/L18/L25 subcomplex. Contacts the 5S and 23S rRNAs.

Functionally, this is one of the proteins that bind and probably mediate the attachment of the 5S RNA into the large ribosomal subunit, where it forms part of the central protuberance. In Hydrogenovibrio crunogenus (strain DSM 25203 / XCL-2) (Thiomicrospira crunogena), this protein is Large ribosomal subunit protein uL18.